The chain runs to 76 residues: Kappa-actitoxin-Avd4o (76 aa).

The N-terminal stretch at 1 to 19 (MNKALFLSLVVLCAAVVFA) is a signal peptide. A propeptide spanning residues 20-33 (AEDLQKAKHAPFKL) is cleaved from the precursor. Intrachain disulfides connect C37–C72, C39–C65, and C55–C73.

It belongs to the sea anemone type 3 (BDS) potassium channel toxin family. In terms of tissue distribution, experimental results show no expression in the ectodermal tissue from the distal and proximal tentacles, body wall, and oral disk. Since paralogs are expressed in this tissue, an expression of this toxin in this tissue is probable. The negative results could be explained by the very low abundance of EST sequences.

The protein localises to the secreted. It is found in the nematocyst. Its function is as follows. Blocks Kv3 voltage-gated potassium channels. Reduces blood pressure. This is Kappa-actitoxin-Avd4o from Anemonia viridis (Snakelocks anemone).